We begin with the raw amino-acid sequence, 413 residues long: Gamma-DL-glutamyl hydrolase (413 aa).

A signal peptide spans 1–32 (MNTLANWKKFLLVAVIICFLVPIMTKAEIAEA). NlpC/P60 domains are found at residues 33–159 (DTSS…RRIA), 163–287 (ATAD…RRFD), and 291–413 (IPKE…IRVQ). Cysteine 194 serves as the catalytic Nucleophile. The active-site Proton acceptor is the histidine 247. Glutamine 259 is a catalytic residue.

It belongs to the peptidase C40 family.

The protein resides in the secreted. Its subcellular location is the cell wall. With respect to regulation, inhibited by pretreatment with 1 mM 4-(hydroxymercuri)benzoate, a sulfhydryl inhibitor. In terms of biological role, cleaves, in an endo-type manner, the gamma-glutamyl bond between D-glutamate and L-glutamate of poly-gamma-glutamate (PGA). The sequence is that of Gamma-DL-glutamyl hydrolase (pgdS) from Bacillus subtilis (strain 168).